The following is a 290-amino-acid chain: 4-hydroxybenzoate octaprenyltransferase (290 aa).

The next 8 helical transmembrane spans lie at 23–43, 46–66, 99–119, 141–161, 163–183, 213–233, 234–254, and 268–288; these read IGAL…TPGV, LWIM…GCVV, LFVV…TMTI, LPQV…FAAV, ESVP…AVAY, LIIG…GELN, GLGW…VYQQ, and AFMN…MSYW.

It belongs to the UbiA prenyltransferase family. It depends on Mg(2+) as a cofactor.

It is found in the cell inner membrane. It catalyses the reaction all-trans-octaprenyl diphosphate + 4-hydroxybenzoate = 4-hydroxy-3-(all-trans-octaprenyl)benzoate + diphosphate. The protein operates within cofactor biosynthesis; ubiquinone biosynthesis. Functionally, catalyzes the prenylation of para-hydroxybenzoate (PHB) with an all-trans polyprenyl group. Mediates the second step in the final reaction sequence of ubiquinone-8 (UQ-8) biosynthesis, which is the condensation of the polyisoprenoid side chain with PHB, generating the first membrane-bound Q intermediate 3-octaprenyl-4-hydroxybenzoate. This Shigella flexneri protein is 4-hydroxybenzoate octaprenyltransferase.